A 240-amino-acid polypeptide reads, in one-letter code: Cytochrome c-551 (240 aa).

The heme c site is built by Cys-41, Cys-44, His-45, Cys-128, Cys-132, and His-133.

Post-translationally, binds 2 heme c groups per subunit.

The protein is Cytochrome c-551 of Rhodocyclus tenuis (Rhodospirillum tenue).